Consider the following 123-residue polypeptide: Large ribosomal subunit protein uL14 (123 aa).

Belongs to the universal ribosomal protein uL14 family. As to quaternary structure, part of the 50S ribosomal subunit. Forms a cluster with proteins L3 and L19. In the 70S ribosome, L14 and L19 interact and together make contacts with the 16S rRNA in bridges B5 and B8.

In terms of biological role, binds to 23S rRNA. Forms part of two intersubunit bridges in the 70S ribosome. The sequence is that of Large ribosomal subunit protein uL14 from Vibrio parahaemolyticus serotype O3:K6 (strain RIMD 2210633).